Consider the following 185-residue polypeptide: MDASEVEFLAEKEQVTVIPNFSLDKVYLIGGDLGPFNPSLPVEVPLWLAINLKQRQKCRIVPPEWMDVEKLEAIRDQERREETFTPMPSPYYMELTKLLLNHAADNIPKADEIRTLVKDTWDTRIAKLRLSADSFVKGQEAHAKLDNLTLMEINTIGTFFTESLNHMYKLRTSLQNPEEGQSQDY.

Belongs to the GINS2/PSF2 family. Component of the GINS complex which is a heterotetramer of gins1/psf1, gins2/psf2, gins3/psf3 and gins4/sld5. Component of the CMG helicase complex, composed of the mcm2-7 complex, the GINS complex and cdc45.

Its subcellular location is the nucleus. It is found in the chromosome. In terms of biological role, required for correct functioning of the GINS complex, a complex that plays an essential role in the initiation of DNA replication, and progression of DNA replication forks. GINS complex is a core component of CDC45-MCM-GINS (CMG) helicase, the molecular machine that unwinds template DNA during replication, and around which the replisome is built. The polypeptide is DNA replication complex GINS protein PSF2 (gins2) (Xenopus laevis (African clawed frog)).